The primary structure comprises 43 residues: Protein PsbN (43 aa).

A helical transmembrane segment spans residues Thr5–Ser27.

Belongs to the PsbN family.

The protein resides in the plastid. It is found in the chloroplast thylakoid membrane. In terms of biological role, may play a role in photosystem I and II biogenesis. The polypeptide is Protein PsbN (Anthoceros angustus (Hornwort)).